An 862-amino-acid chain; its full sequence is Mismatch repair endonuclease PMS2 (862 aa).

ATP contacts are provided by N45, D70, E109, A110, and L111. Basic and acidic residues-rich tracts occupy residues 391–401 (DLEKPMVEKQD), 408–444 (TGEEKKDVSISRLREAFSLRHTTENKPHSPKTPEPRR), 484–495 (PTDRAEVEKDSG), and 528–552 (GSQEHVDSQEKAPKTDDSFSDVDCH). The disordered stretch occupies residues 391 to 552 (DLEKPMVEKQ…DDSFSDVDCH (162 aa)). T573 is subject to Phosphothreonine. The Nuclear localization signal motif lies at 577 to 580 (KRFK). T597 carries the phosphothreonine modification.

It belongs to the DNA mismatch repair MutL/HexB family. As to quaternary structure, heterodimer of PMS2 and MLH1 (MutL alpha); this interaction is required for the stability of both partners. Forms a ternary complex with MutS alpha (MSH2-MSH6) or MutS beta (MSH2-MSH3). Part of the BRCA1-associated genome surveillance complex (BASC), which contains BRCA1, MSH2, MSH6, MLH1, ATM, BLM, PMS2 and the RAD50-MRE11-NBS1 protein complex. This association could be a dynamic process changing throughout the cell cycle and within subnuclear domains. Interacts with MTMR15/FAN1.

The protein localises to the nucleus. The catalysed reaction is ATP + H2O = ADP + phosphate + H(+). Functionally, component of the post-replicative DNA mismatch repair system (MMR). Heterodimerizes with MLH1 to form MutL alpha. DNA repair is initiated by MutS alpha (MSH2-MSH6) or MutS beta (MSH2-MSH3) binding to a dsDNA mismatch, then MutL alpha is recruited to the heteroduplex. Assembly of the MutL-MutS-heteroduplex ternary complex in presence of RFC and PCNA is sufficient to activate endonuclease activity of PMS2. It introduces single-strand breaks near the mismatch and thus generates new entry points for the exonuclease EXO1 to degrade the strand containing the mismatch. DNA methylation would prevent cleavage and therefore assure that only the newly mutated DNA strand is going to be corrected. MutL alpha (MLH1-PMS2) interacts physically with the clamp loader subunits of DNA polymerase III, suggesting that it may play a role to recruit the DNA polymerase III to the site of the MMR. Also implicated in DNA damage signaling, a process which induces cell cycle arrest and can lead to apoptosis in case of major DNA damages. Possesses an ATPase activity, but in the absence of gross structural changes, ATP hydrolysis may not be necessary for proficient mismatch repair. The protein is Mismatch repair endonuclease PMS2 of Homo sapiens (Human).